The chain runs to 1447 residues: MKKLFVVLVVMPLIYGDNFPCSKLTNRTIGNQWNLIETFLLNYSSRLPPNSDVVLGDYFPTVQPWFNCIRNNSNDLYVTLENLKALYWDYATENITWNHRQRLNVVVNGYPYSITVTTTRNFNSAEGAIICICKGSPPTTTTESSLTCNWGSECRLNHKFPICPSNSEANCGNMLYGLQWFADEVVAYLHGASYRISFENQWSGTVTFGDMRATTLEVAGTLVDLWWFNPVYDVSYYRVNNKNGTTVVSNCTDQCASYVANVFTTQPGGFIPSDFSFNNWFLLTNSSTLVSGKLVTKQPLLVNCLWPVPSFEEAASTFCFEGAGFDQCNGAVLNNTVDVIRFNLNFTTNVQSGKGATVFSLNTTGGVTLEISCYTVSDSSFFSYGEIPFGVTDGPRYCYVHYNGTALKYLGTLPPSVKEIAISKWGHFYINGYNFFSTFPIDCISFNLTTGDSDVFWTIAYTSYTEALVQVENTAITKVTYCNSHVNNIKCSQITANLNNGFYPVSSSEVGLVNKSVVLLPSFYTHTIVNITIGLGMKRSGYGQPIASTLSNITLPMQDHNTDVYCIRSDQFSVYVHSTCKSALWDNIFKRNCTDVLDATAVIKTGTCPFSFDKLNNYLTFNKFCLSLSPVGANCKFDVAARTRTNEQVVRSLYVIYEEGDNIVGVPSDNSGVHDLSVLHLDSCTDYNIYGRTGVGIIRQTNRTLLSGLYYTSLSGDLLGFKNVSDGVIYSVTPCDVSAQAAVIDGTIVGAITSINSELLGLTHWTTTPNFYYYSIYNYTNDRTRGTAIDSNDVDCEPVITYSNIGVCKNGAFVFINVTHSDGDVQPISTGNVTIPTNFTISVQVEYIQVYTTPVSIDCSRYVCNGNPRCNKLLTQYVSACQTIEQALAMGARLENMEVDSMLFVSENALKLASVEAFNSSETLDPIYKEWPNIGGSWLEGLKYILPSHNSKRKYRSAIEDLLFDKVVTSGLGTVDEDYKRCTGGYDIADLVCAQYYNGIMVLPGVANADKMTMYTASLAGGITLGALGGGAVAIPFAVAVQARLNYVALQTDVLNKNQQILASAFNQAIGNITQSFGKVNDAIHQTSRGLATVAKALAKVQDVVNIQGQALSHLTVQLQNNFQAISSSISDIYNRLDELSADAQVDRLITGRLTALNAFVSQTLTRQAEVRASRQLAKDKVNECVRSQSQRFGFCGNGTHLFSLANAAPNGMIFFHTVLLPTAYETVTAWPGICASDGDRTFGLVVKDVQLTLFRNLDDKFYLTPRTMYQPRVATSSDFVQIEGCDVLFVNATVSDLPSIIPDYIDINQTVQDILENFRPNWTVPELTFDIFNATYLNLTGEIDDLEFRSEKLHNTTVELAILIDNINNTLVNLEWLNRIETYVKWPWYVWLLIGLVVIFCIPLLLFCCCSTGCCGCIGCLGSCCHSICSRRQFENYEPIEKVHVH.

Positions 1-28 (MKKLFVVLVVMPLIYGDNFPCSKLTNRT) are cleaved as a signal peptide. S1 regions lie at residues 17-774 (DNFP…FYYY) and 29-774 (IGNQ…FYYY). At 29 to 1388 (IGNQWNLIET…NRIETYVKWP (1360 aa)) the chain is on the virion surface side. The segment at 655–799 (VIYEEGDNIV…DSNDVDCEPV (145 aa)) is interaction with host ANPEP. Residues 775–1447 (SIYNYTNDRT…YEPIEKVHVH (673 aa)) form an S2 region. The fusion peptide stretch occupies residues 1020-1041 (AGGITLGALGGGAVAIPFAVAV). Positions 1035-1154 (IPFAVAVQAR…QVDRLITGRL (120 aa)) are heptad repeat 1 (HR1). 2 coiled-coil regions span residues 1102-1146 (QDVV…DAQV) and 1336-1378 (TYLN…LEWL). The segment at 1303-1400 (PDYIDINQTV…VWLLIGLVVI (98 aa)) is heptad repeat 2 (HR2). A helical membrane pass occupies residues 1389–1408 (WYVWLLIGLVVIFCIPLLLF). The Intravirion segment spans residues 1409-1447 (CCCSTGCCGCIGCLGSCCHSICSRRQFENYEPIEKVHVH). The KxHxx motif lies at 1443–1447 (KVHVH).

Belongs to the alphacoronaviruses spike protein family. Homotrimer. During virus morphogenesis, found in a complex with M and HE proteins. Interacts with host ANPEP.

It is found in the virion membrane. Its subcellular location is the host endoplasmic reticulum-Golgi intermediate compartment membrane. S1 region attaches the virion to the cell membrane by interacting with host ANPEP/aminopeptidase N, initiating the infection. Binding to the receptor probably induces conformational changes in the S glycoprotein unmasking the fusion peptide of S2 region and activating membranes fusion. S2 region belongs to the class I viral fusion protein. Under the current model, the protein has at least 3 conformational states: pre-fusion native state, pre-hairpin intermediate state, and post-fusion hairpin state. During viral and target cell membrane fusion, the coiled coil regions (heptad repeats) regions assume a trimer-of-hairpins structure, positioning the fusion peptide in close proximity to the C-terminal region of the ectodomain. The formation of this structure appears to drive apposition and subsequent fusion of viral and target cell membranes. The protein is Spike glycoprotein of Sus scrofa (Pig).